The sequence spans 101 residues: MHWIFKKEPNISVQQNPTKENVSDVSMIEINNLTALERDEKVETEDINTNVIANTYTVQANVPTAFQTSETNSNTVTNVPKSPELISIQRLERLKNRYTFL.

This is an uncharacterized protein from Mycoplasma pneumoniae (strain ATCC 29342 / M129 / Subtype 1) (Mycoplasmoides pneumoniae).